A 325-amino-acid chain; its full sequence is Urease accessory protein UreD (325 aa).

This sequence belongs to the UreD family. In terms of assembly, ureD, UreF and UreG form a complex that acts as a GTP-hydrolysis-dependent molecular chaperone, activating the urease apoprotein by helping to assemble the nickel containing metallocenter of UreC. The UreE protein probably delivers the nickel.

It localises to the cytoplasm. In terms of biological role, required for maturation of urease via the functional incorporation of the urease nickel metallocenter. Expression of the urease operon increases the likelihood of bacterial survival by contributing to acid resistance in vitro and in vivo in BALB/c mice. Y.enterocolitica enters the body via an oral path and must survive the acidic stomach before being able to colonize the intestinal mucosa. The polypeptide is Urease accessory protein UreD (Yersinia enterocolitica).